The chain runs to 362 residues: Oxysterol-binding protein 5 (362 aa).

It belongs to the OSBP family.

The sequence is that of Oxysterol-binding protein 5 (osbE) from Dictyostelium discoideum (Social amoeba).